The chain runs to 206 residues: Isochorismatase family protein 1A (206 aa).

Belongs to the isochorismatase family.

The protein is Isochorismatase family protein 1A of Dictyostelium discoideum (Social amoeba).